The primary structure comprises 79 residues: Hematopoietic cell signal transducer (79 aa).

Positions 1 to 18 are cleaved as a signal peptide; sequence MAPPGGILFLLLLPVAAA. Over 19–35 the chain is Extracellular; sequence QVTSGSCSGCGPLSLPL. Residues 36-56 form a helical membrane-spanning segment; the sequence is LAGLVAADAVVSLLIVVGVFV. The Cytoplasmic segment spans residues 57-79; it reads CGRPRSRPTQEDGKIYINMPGRG. Position 72 is a phosphotyrosine (Y72). A GRB2 binding site region spans residues 72 to 74; that stretch reads YIN. Residues 72–75 form a PIK3R1 binding site region; the sequence is YINM.

Belongs to the DAP10 family. As to quaternary structure, homodimer; Disulfide-linked. Heterohexamer composed of four subunits of HCST/DAP10 and two subunits of KLRK1. Interacts (via transmembrane domain) with KLRK1 (via transmembrane domain); the interaction is required for KLRK1 NK cell surface and induces NK cell-mediated cytotoxicity. Interacts with PIK3R1 and GRB2. Interacts with CLEC5A. Forms an CLEC5A/TYROBP/HCST trimolecular complex depending almost solely on TYROBP. Interacts with KLRK1. Interacts with CD300H. In terms of processing, phosphorylated; PIK3R1 and GRB2 associate specifically with tyrosine-phosphorylated HCST. Post-translationally, O-glycosylated. In terms of tissue distribution, expressed predominantly in lymphohematopoietic tissues.

It localises to the membrane. Transmembrane adapter protein which associates with KLRK1 to form an activation receptor KLRK1-HCST in lymphoid and myeloid cells; this receptor plays a major role in triggering cytotoxicity against target cells expressing cell surface ligands such as MHC class I chain-related MICA and MICB, and UL16-binding proteins (ULBPs); these ligands are up-regulated by stress conditions and pathological state such as viral infection and tumor transformation. Functions as a docking site for PI3-kinase PIK3R1 and GRB2. Interaction of ULBPs with KLRK1-HCST triggers calcium mobilization and activation of the PIK3R1, MAP2K/ERK, and JAK2/STAT5 signaling pathways. Both PIK3R1 and GRB2 are required for full KLRK1-HCST-mediated activation and ultimate killing of target cells. In NK cells, KLRK1-HCST signaling directly induces cytotoxicity and enhances cytokine production initiated via DAP12/TYROBP-associated receptors. In T-cells, it provides primarily costimulation for TCR-induced signals. KLRK1-HCST receptor plays a role in immune surveillance against tumors and is required for cytolysis of tumors cells; indeed, melanoma cells that do not express KLRK1 ligands escape from immune surveillance mediated by NK cells. This is Hematopoietic cell signal transducer (HCST) from Sus scrofa (Pig).